Here is a 353-residue protein sequence, read N- to C-terminus: Uroporphyrinogen decarboxylase (353 aa).

Substrate-binding positions include 35–39 (RQAGR), F54, D84, Y160, S215, and H329.

The protein belongs to the uroporphyrinogen decarboxylase family. As to quaternary structure, homodimer.

It localises to the cytoplasm. It catalyses the reaction uroporphyrinogen III + 4 H(+) = coproporphyrinogen III + 4 CO2. It functions in the pathway porphyrin-containing compound metabolism; protoporphyrin-IX biosynthesis; coproporphyrinogen-III from 5-aminolevulinate: step 4/4. Functionally, catalyzes the decarboxylation of four acetate groups of uroporphyrinogen-III to yield coproporphyrinogen-III. This is Uroporphyrinogen decarboxylase from Staphylococcus epidermidis (strain ATCC 12228 / FDA PCI 1200).